Consider the following 352-residue polypeptide: C-C chemokine receptor type 5 (352 aa).

Residues 1 to 30 are Extracellular-facing; the sequence is MDYQVSSPIYDIDYGPSEPCRKIDVKQMGA. Sulfotyrosine is present on tyrosine 3. Serine 6 and serine 7 each carry an O-linked (GalNAc...) serine glycan. 2 positions are modified to sulfotyrosine: tyrosine 10 and tyrosine 14. 2 cysteine pairs are disulfide-bonded: cysteine 20/cysteine 269 and cysteine 101/cysteine 178. The helical transmembrane segment at 31-58 threads the bilayer; sequence QLLPPLYSLVFLFGFVGNMLVVLILINC. Residues 59–68 are Cytoplasmic-facing; sequence KRLKSMTDIY. The chain crosses the membrane as a helical span at residues 69 to 89; that stretch reads LLNLAISDLLFLFTIPFWAHY. Over 90 to 102 the chain is Extracellular; sequence AAGQWDFGNTMCQ. The helical transmembrane segment at 103 to 124 threads the bilayer; sequence FLTALYFIGFFSGIFFIILLTI. The Cytoplasmic segment spans residues 125-141; the sequence is DRYLAIVHAVFALKART. A helical transmembrane segment spans residues 142-166; that stretch reads VTFGVVTSVITWVVAVFASLPGIIF. The Extracellular portion of the chain corresponds to 167–198; it reads TRSQKEGYHYSCSPHFPFSQYRFWKNFETLKM. A helical membrane pass occupies residues 199-218; the sequence is VILGLVLPLLVMVICYSGIL. Residues 219-235 lie on the Cytoplasmic side of the membrane; it reads KTLLRCRNEKKRHRAVR. The helical transmembrane segment at 236–260 threads the bilayer; sequence LIFTIMIVYFLFWAPYNIVLLINTY. Residues 261 to 277 are Extracellular-facing; the sequence is PDFFGVNNCNSSNRLDQ. A helical transmembrane segment spans residues 278 to 301; sequence AMQVTETLGMTHCCVNPIIYAFVG. Residues 302 to 352 are Cytoplasmic-facing; sequence EKFRNYLVIFFQKHIAKRFCKCCSIFQKEAPERANSVYTRSTGEQEISVGL. S-palmitoyl cysteine attachment occurs at residues cysteine 321, cysteine 323, and cysteine 324. A phosphoserine; by BARK1 mark is found at serine 337, serine 342, and serine 349.

This sequence belongs to the G-protein coupled receptor 1 family. In terms of assembly, interacts with PRAF2. Efficient ligand binding to CCL3/MIP-1alpha and CCL4/MIP-1beta requires sulfation, O-glycosylation and sialic acid modifications. Glycosylation on Ser-6 is required for efficient binding of CCL4. Interacts with GRK2. Interacts with ARRB1 and ARRB2. Interacts with CNIH4. Interacts with S100A4; this interaction stimulates T-lymphocyte chemotaxis. Sulfated on at least 2 of the N-terminal tyrosines. Sulfation is required for efficient binding of the chemokines, CCL3 and CCL4. Post-translationally, palmitoylation in the C-terminal is important for cell surface expression. In terms of processing, phosphorylation on serine residues in the C-terminal is stimulated by binding CC chemokines especially by APO-RANTES. O-glycosylated, but not N-glycosylated. Ser-6 appears to be the major site even if Ser-7 may be also O-glycosylated. Also sialylated glycans present which contribute to chemokine binding. Ser-17 may also be glycosylated and, if so, with small moieties such as a T-antigen.

Its subcellular location is the cell membrane. Functionally, receptor for a number of inflammatory CC-chemokines including CCL3/MIP-1-alpha, CCL4/MIP-1-beta and RANTES and subsequently transduces a signal by increasing the intracellular calcium ion level. May play a role in the control of granulocytic lineage proliferation or differentiation. Participates in T-lymphocyte migration to the infection site by acting as a chemotactic receptor. This Saimiri sciureus (Common squirrel monkey) protein is C-C chemokine receptor type 5 (CCR5).